The sequence spans 201 residues: Recombination protein RecR (201 aa).

A C4-type zinc finger spans residues 60–75 (CKSCGNIDTRNPCTVC). Residues 83-178 (SIIVVVADVA…KVTRLAHGVP (96 aa)) form the Toprim domain.

Belongs to the RecR family.

Functionally, may play a role in DNA repair. It seems to be involved in an RecBC-independent recombinational process of DNA repair. It may act with RecF and RecO. This is Recombination protein RecR from Rhodopseudomonas palustris (strain BisB5).